We begin with the raw amino-acid sequence, 329 residues long: Mitochondrial nuclease (329 aa).

The active-site Proton acceptor is the H138. N170 is a binding site for Mg(2+).

It belongs to the DNA/RNA non-specific endonuclease family. As to quaternary structure, homodimer. Requires Mn(2+) as cofactor. It depends on Mg(2+) as a cofactor.

Its subcellular location is the mitochondrion inner membrane. Its function is as follows. This enzyme has both RNase and DNase activity. This chain is Mitochondrial nuclease (NUC1), found in Saccharomyces cerevisiae (strain ATCC 204508 / S288c) (Baker's yeast).